Consider the following 142-residue polypeptide: Peptide methionine sulfoxide reductase MsrB (142 aa).

In terms of domain architecture, MsrB spans 2–125; the sequence is IKKNKNDLNE…NSAAVQFIPY (124 aa). Residue cysteine 114 is the Nucleophile of the active site.

This sequence belongs to the MsrB Met sulfoxide reductase family.

The catalysed reaction is L-methionyl-[protein] + [thioredoxin]-disulfide + H2O = L-methionyl-(R)-S-oxide-[protein] + [thioredoxin]-dithiol. This is Peptide methionine sulfoxide reductase MsrB from Staphylococcus saprophyticus subsp. saprophyticus (strain ATCC 15305 / DSM 20229 / NCIMB 8711 / NCTC 7292 / S-41).